Consider the following 365-residue polypeptide: Peptide chain release factor 2 (365 aa).

Gln251 carries the post-translational modification N5-methylglutamine.

Belongs to the prokaryotic/mitochondrial release factor family. Post-translationally, methylated by PrmC. Methylation increases the termination efficiency of RF2.

It is found in the cytoplasm. Functionally, peptide chain release factor 2 directs the termination of translation in response to the peptide chain termination codons UGA and UAA. This is Peptide chain release factor 2 from Campylobacter jejuni subsp. jejuni serotype O:6 (strain 81116 / NCTC 11828).